Reading from the N-terminus, the 709-residue chain is Polyribonucleotide nucleotidyltransferase (709 aa).

2 residues coordinate Mg(2+): Asp-491 and Asp-497. Residues 557–617 form the KH domain; it reads PKSESFMIPP…ENLQKAKTFI (61 aa). Positions 641-709 constitute an S1 motif domain; the sequence is GERFVGKIKK…KNKVELGLVE (69 aa).

The protein belongs to the polyribonucleotide nucleotidyltransferase family. It depends on Mg(2+) as a cofactor.

It is found in the cytoplasm. The catalysed reaction is RNA(n+1) + phosphate = RNA(n) + a ribonucleoside 5'-diphosphate. Its function is as follows. Involved in mRNA degradation. Catalyzes the phosphorolysis of single-stranded polyribonucleotides processively in the 3'- to 5'-direction. This chain is Polyribonucleotide nucleotidyltransferase, found in Helicobacter hepaticus (strain ATCC 51449 / 3B1).